Reading from the N-terminus, the 261-residue chain is 5'-nucleotidase SurE (261 aa).

Positions 8, 9, 40, and 94 each coordinate a divalent metal cation.

The protein belongs to the SurE nucleotidase family. The cofactor is a divalent metal cation.

The protein resides in the cytoplasm. It carries out the reaction a ribonucleoside 5'-phosphate + H2O = a ribonucleoside + phosphate. Nucleotidase that shows phosphatase activity on nucleoside 5'-monophosphates. This chain is 5'-nucleotidase SurE, found in Anaplasma marginale (strain St. Maries).